We begin with the raw amino-acid sequence, 936 residues long: MVYSRRGSLGSRLLLLWLLLAYWKAGSGQLHYSIPEEAKHGTFVGRIAQDLGLELAELVPRLFRVASKGRGDLLEVNLQNGILFVNSRIDREELCRRRAECSIHLEVIVDRPLQVFHVEVAVKDINDNPPRFSRQEQTLFILESRMPDSRFPLEGASDLDIGANAQLRYRLNPNEYFDLDVKTNEEETNFLELVLRKSLDREETQEHRLLVIATDGGKPELTGTVQLLINVLDANDNAPEFDKSIYNVRLLENAPSGTLVIKLNASDADEGINKEIVYFFSNLVLDDVKSKFIINSNTGEIKVNGELDYEDCNSYEINIDAVDKSTFPLSGHCKVVVKLLDVNDNTPEMAITTLFLPVKEDAPLSTVIALITVSDRDSGANGPVTCSLMPHVPFKLVSTFKNYYSLVLDSALDRESLSVYELVVTARDGGSPSLWATASVSVEVADVNDTLRAFAQPQYTVFVKENNPPGCHIFTVSARDADAQENALVSYSLVERRVGERPLSSYVSVHAESGKVYALQPLDHEEVELLQFQVSARDAGVPPLGSNVTLQVFVLDENDNAPALLAPRVGGTGGAVSELVPRSVGAGHVVAKVRAVDPDSGYNAWLSYELQPAPGSARIPFRVGLYTGEISTTRSLDETEAPRHRLLVLVKDHGEPPLTATATVLVSLVESGQAPKASSRASAGAVGPEAALVDVNVYLIIAICAVSSLLVLTLLLYTALRCSAQPTEAVCTRGKPTLVCSSAVGSWSYSQQRRQRVCSGEAPPKTDLMAFSPSLPQGPTSTDNPRQPNPDWRYSASLRAGMHSSVHLEEAGILRAGPGGPDQQWPTVSSATPEPEAGEVSPPVGAGVNSNSWTFKYGPGNPKQSGPGELPDKFIIPGSPAIISIRQEPANSQIDKSDFITFGKKEETKKKKKKKKGNKTQEKKEKGNSTTDNSDQ.

The signal sequence occupies residues 1 to 28 (MVYSRRGSLGSRLLLLWLLLAYWKAGSG). The Extracellular segment spans residues 29–696 (QLHYSIPEEA…GPEAALVDVN (668 aa)). 6 Cadherin domains span residues 33–132 (SIPE…PPRF), 156–241 (ASDL…APEF), 242–349 (DKSI…TPEM), 350–454 (AITT…LRAF), 455–564 (AQPQ…APAL), and 580–677 (VPRS…APKA). N-linked (GlcNAc...) asparagine glycans are attached at residues N264, N448, and N547. Residues 697-717 (VYLIIAICAVSSLLVLTLLLY) traverse the membrane as a helical segment. The Cytoplasmic portion of the chain corresponds to 718–936 (TALRCSAQPT…GNSTTDNSDQ (219 aa)). Disordered regions lie at residues 759–793 (SGEAPPKTDLMAFSPSLPQGPTSTDNPRQPNPDWR), 815–875 (RAGP…DKFI), and 887–936 (QEPA…NSDQ). PXXP repeat units follow at residues 773 to 776 (PSLP), 785 to 788 (PRQP), 818 to 821 (PGGP), 873 to 876 (KFII), and 877 to 890 (PGSPAIISIRQEPA). The tract at residues 773-890 (PSLPQGPTST…AIISIRQEPA (118 aa)) is 5 X 4 AA repeats of P-X-X-P. Residues 774–786 (SLPQGPTSTDNPR) are compositionally biased toward polar residues. The segment covering 895-909 (DKSDFITFGKKEETK) has biased composition (basic and acidic residues).

It localises to the cell membrane. Its function is as follows. Potential calcium-dependent cell-adhesion protein. May be involved in the establishment and maintenance of specific neuronal connections in the brain. The sequence is that of Protocadherin alpha-5 (PCDHA5) from Pan troglodytes (Chimpanzee).